A 79-amino-acid polypeptide reads, in one-letter code: UPF0291 protein lp_2062 (79 aa).

The protein belongs to the UPF0291 family.

It localises to the cytoplasm. The chain is UPF0291 protein lp_2062 from Lactiplantibacillus plantarum (strain ATCC BAA-793 / NCIMB 8826 / WCFS1) (Lactobacillus plantarum).